Here is a 107-residue protein sequence, read N- to C-terminus: Phosphoribosyl-ATP pyrophosphatase (107 aa).

Belongs to the PRA-PH family.

The protein localises to the cytoplasm. The enzyme catalyses 1-(5-phospho-beta-D-ribosyl)-ATP + H2O = 1-(5-phospho-beta-D-ribosyl)-5'-AMP + diphosphate + H(+). Its pathway is amino-acid biosynthesis; L-histidine biosynthesis; L-histidine from 5-phospho-alpha-D-ribose 1-diphosphate: step 2/9. The sequence is that of Phosphoribosyl-ATP pyrophosphatase from Caulobacter sp. (strain K31).